We begin with the raw amino-acid sequence, 763 residues long: Phosphoglycerol transferase I (763 aa).

4 helical membrane-spanning segments follow: residues 1–21, 26–46, 77–97, and 108–128; these read MSELLSFALFLASVLIYAWKA, WWFAATLTVLGLFVVLNITLF, ILPGIGIVLGLTAVFGALGWI, and FGYSLLALLLALGSVDASPAF.

It belongs to the OpgB family.

The protein localises to the cell inner membrane. It carries out the reaction a phosphatidylglycerol + a membrane-derived-oligosaccharide D-glucose = a 1,2-diacyl-sn-glycerol + a membrane-derived-oligosaccharide 6-(glycerophospho)-D-glucose.. It functions in the pathway glycan metabolism; osmoregulated periplasmic glucan (OPG) biosynthesis. Its function is as follows. Transfers a phosphoglycerol residue from phosphatidylglycerol to the membrane-bound nascent glucan backbones. The polypeptide is Phosphoglycerol transferase I (Escherichia coli O139:H28 (strain E24377A / ETEC)).